The following is a 62-amino-acid chain: Histone H1.2, embryonic (62 aa).

One can recognise an H15 domain in the interval 1 to 53 (HVVAAITALKERGGSSMKKQSVFIKKALKSGVEKGTLVQVKGKGASGSFKLGK).

This sequence belongs to the histone H1/H5 family.

It is found in the nucleus. The protein resides in the chromosome. Its function is as follows. Histones H1 are necessary for the condensation of nucleosome chains into higher-order structures. This chain is Histone H1.2, embryonic, found in Parechinus angulosus (Angulate sea urchin).